Here is a 357-residue protein sequence, read N- to C-terminus: Snake venom metalloproteinase H4 (357 aa).

The signal sequence occupies residues 1 to 6 (FPYQGS). Positions 7–176 (SIMLESGKVN…KKASQLIVST (170 aa)) are excised as a propeptide. Residues 180 to 357 (RYMEIVIVVD…EVIKYFLDSK (178 aa)) enclose the Peptidase M12B domain. H316 serves as a coordination point for Zn(2+). E317 is an active-site residue. Zn(2+) contacts are provided by H320 and H326. An intrachain disulfide couples C333 to C339.

The protein belongs to the venom metalloproteinase (M12B) family. P-I subfamily. As to quaternary structure, monomer. It depends on Zn(2+) as a cofactor. As to expression, expressed by the venom gland.

The protein localises to the secreted. Its function is as follows. Snake venom metalloproteinase that impairs hemostasis in the envenomed animal. In Deinagkistrodon acutus (Hundred-pace snake), this protein is Snake venom metalloproteinase H4.